Here is a 333-residue protein sequence, read N- to C-terminus: Tryptophan--tRNA ligase (333 aa).

ATP is bound by residues glutamine 9 to threonine 11 and glycine 17 to asparagine 18. Residues proline 10–asparagine 18 carry the 'HIGH' region motif. Aspartate 140 lines the L-tryptophan pocket. ATP contacts are provided by residues glycine 152–aspartate 154, isoleucine 191, and lysine 200–serine 204. The short motif at lysine 200–serine 204 is the 'KMSKS' region element.

The protein belongs to the class-I aminoacyl-tRNA synthetase family. In terms of assembly, homodimer.

Its subcellular location is the cytoplasm. The enzyme catalyses tRNA(Trp) + L-tryptophan + ATP = L-tryptophyl-tRNA(Trp) + AMP + diphosphate + H(+). Functionally, catalyzes the attachment of tryptophan to tRNA(Trp). The polypeptide is Tryptophan--tRNA ligase (Ureaplasma parvum serovar 3 (strain ATCC 700970)).